The sequence spans 158 residues: S-ribosylhomocysteine lyase (158 aa).

Fe cation-binding residues include His54, His58, and Cys124.

This sequence belongs to the LuxS family. In terms of assembly, homodimer. The cofactor is Fe cation.

The catalysed reaction is S-(5-deoxy-D-ribos-5-yl)-L-homocysteine = (S)-4,5-dihydroxypentane-2,3-dione + L-homocysteine. Its function is as follows. Involved in the synthesis of autoinducer 2 (AI-2) which is secreted by bacteria and is used to communicate both the cell density and the metabolic potential of the environment. The regulation of gene expression in response to changes in cell density is called quorum sensing. Catalyzes the transformation of S-ribosylhomocysteine (RHC) to homocysteine (HC) and 4,5-dihydroxy-2,3-pentadione (DPD). The protein is S-ribosylhomocysteine lyase of Lactobacillus gasseri (strain ATCC 33323 / DSM 20243 / BCRC 14619 / CIP 102991 / JCM 1131 / KCTC 3163 / NCIMB 11718 / NCTC 13722 / AM63).